Reading from the N-terminus, the 317-residue chain is Melanocyte-stimulating hormone receptor (317 aa).

Residues 1–37 (MPVQGSQRRLLGSLNSTPTATPHLGLAANQTGAWCLE) are Extracellular-facing. Residue Asn29 is glycosylated (N-linked (GlcNAc...) asparagine). Residues 38-63 (VSIPDGLFLSLGLVSLVENVLVVTAI) traverse the membrane as a helical segment. Over 64–72 (AKNRNLHSP) the chain is Cytoplasmic. Residues 73-93 (MYCFICCLALSDLLVSGSNML) form a helical membrane-spanning segment. At 94 to 118 (ETAVTLLLEAGALAARAAVVQQLDN) the chain is on the extracellular side. A helical membrane pass occupies residues 119 to 140 (VIDVITCSSMLSSLCFLGAIAV). The Cytoplasmic portion of the chain corresponds to 141–163 (DRYISIFYALRYHSIVTLPRARR). Residues 164–183 (AVAAIWVASVLFSMLFIAYY) traverse the membrane as a helical segment. Over 184–191 (DHAAVLLC) the chain is Extracellular. Residues 192–211 (LVVFFLAMLVLMAVLYVHML) form a helical membrane-spanning segment. Residues 212–240 (ARACQHAQGIARLHKRQRPAHQGFGLKGA) lie on the Cytoplasmic side of the membrane. A helical transmembrane segment spans residues 241–266 (ATLTILLGIFFLCWGPFFLHLTLIVL). At 267–279 (CPQHPTCSCIFKN) the chain is on the extracellular side. The chain crosses the membrane as a helical span at residues 280 to 300 (FNLFLALIICNAIIDPLIYAF). The Cytoplasmic segment spans residues 301–317 (RSQELRRTLKEVLLCSW). The S-palmitoyl cysteine moiety is linked to residue Cys315.

The protein belongs to the G-protein coupled receptor 1 family. As to quaternary structure, interacts with MGRN1, but does not undergo MGRN1-mediated ubiquitination; this interaction competes with GNAS-binding and thus inhibits agonist-induced cAMP production. Interacts with OPN3; the interaction results in a decrease in MC1R-mediated cAMP signaling and ultimately a decrease in melanin production in melanocytes.

The protein localises to the cell membrane. Its function is as follows. Receptor for MSH (alpha, beta and gamma) and ACTH. The activity of this receptor is mediated by G proteins which activate adenylate cyclase. Mediates melanogenesis, the production of eumelanin (black/brown) and phaeomelanin (red/yellow), via regulation of cAMP signaling in melanocytes. This Allenopithecus nigroviridis (Allen's swamp monkey) protein is Melanocyte-stimulating hormone receptor (MC1R).